A 384-amino-acid polypeptide reads, in one-letter code: Ribosomal RNA large subunit methyltransferase G (384 aa).

It belongs to the methyltransferase superfamily. RlmG family.

Its subcellular location is the cytoplasm. The enzyme catalyses guanosine(1835) in 23S rRNA + S-adenosyl-L-methionine = N(2)-methylguanosine(1835) in 23S rRNA + S-adenosyl-L-homocysteine + H(+). Its function is as follows. Specifically methylates the guanine in position 1835 (m2G1835) of 23S rRNA. This Streptomyces griseus subsp. griseus (strain JCM 4626 / CBS 651.72 / NBRC 13350 / KCC S-0626 / ISP 5235) protein is Ribosomal RNA large subunit methyltransferase G.